A 694-amino-acid chain; its full sequence is Outer dynein arm-docking complex subunit 1 (694 aa).

Coiled-coil stretches lie at residues 27-192 (ELSR…RYLN) and 222-259 (REEA…HLEQ). A disordered region spans residues 271–290 (RQPDPGVVQKEEQRAWETSE). Residues 339 to 418 (NFINEQNSEL…EKIKTDIQVL (80 aa)) are a coiled coil. 2 disordered regions span residues 531–550 (QDEE…TLSS) and 571–694 (SILS…RGYN). Phosphoserine is present on residues S536, S542, S543, and S545. Low complexity predominate over residues 628-642 (TSSSSYLGSTGYLET). A compositionally biased stretch (polar residues) spans 655–672 (SQSMGSEMSRGFSSGSGQ). The segment covering 673-687 (TSSAAPASRPSSATS) has biased composition (low complexity).

Belongs to the ODA1/DCC2 family. Component of the outer dynein arm-docking complex along with ODAD2, ODAD3, ODAD4 and CLXN. Interacts with ODAD3. Interacts with ODAD4; this interaction may facilitate the recruitment and/or attachment of outer dynein arm docking complex proteins,including ODAD1, ODAD3, and ODAD4 to ciliary axonemes. Interacts with DNAH9. Interacts with MNS1. Interacts with PIERCE1 and PIERCE2; the interactions link the outer dynein arms docking complex (ODA-DC) to the internal microtubule inner proteins (MIP) in cilium axoneme.

Its subcellular location is the cytoplasm. The protein localises to the cytoskeleton. It is found in the cilium axoneme. Functionally, component of the outer dynein arm-docking complex that mediates outer dynein arms (ODA) binding onto the doublet microtubule. Involved in mediating assembly of both ODAs and their axonemal docking complex onto ciliary microtubules. The sequence is that of Outer dynein arm-docking complex subunit 1 (Odad1) from Rattus norvegicus (Rat).